We begin with the raw amino-acid sequence, 297 residues long: Cyclin-dependent kinase 1 (297 aa).

Met1 is modified (N-acetylmethionine). Position 4 is a phosphotyrosine; by PKR (Tyr4). The region spanning 4 to 287 is the Protein kinase domain; it reads YIKIEKIGEG…GKMALKHPYF (284 aa). N6-acetyllysine; alternate occurs at positions 6 and 9. Glycyl lysine isopeptide (Lys-Gly) (interchain with G-Cter in SUMO2); alternate cross-links involve residues Lys6 and Lys9. An ATP-binding site is contributed by 10 to 18; that stretch reads IGEGTYGVV. Position 14 is a phosphothreonine (Thr14). Phosphotyrosine; by PKMYT1, WEE1, WEE2 and PKC/PRKCD is present on Tyr15. Tyr15 is subject to Phosphotyrosine; by WEE1 and WEE2. Tyr19 is subject to Phosphotyrosine. A Glycyl lysine isopeptide (Lys-Gly) (interchain with G-Cter in SUMO2) cross-link involves residue Lys20. Lys33 serves as a coordination point for ATP. Ser39 carries the phosphoserine modification. Tyr77 bears the Phosphotyrosine mark. The active-site Proton acceptor is Asp128. Lys139 participates in a covalent cross-link: Glycyl lysine isopeptide (Lys-Gly) (interchain with G-Cter in SUMO2). Thr141 bears the Phosphothreonine mark. Thr161 is subject to Phosphothreonine; by CAK. Phosphoserine is present on Ser178. Thr222 carries the phosphothreonine modification. N6-succinyllysine is present on Lys245. At Ser248 the chain carries Phosphoserine.

It belongs to the protein kinase superfamily. CMGC Ser/Thr protein kinase family. CDC2/CDKX subfamily. Forms a stable but non-covalent complex with a regulatory subunit and with a cyclin. Interacts with cyclins-B (CCNB1, CCNB2 and CCNB3) to form a serine/threonine kinase holoenzyme complex also known as maturation promoting factor (MPF). The cyclin subunit imparts substrate specificity to the complex. Can also form CDK1-cylin-D and CDK1-cyclin-E complexes that phosphorylate RB1 in vitro. Binds to RB1 and other transcription factors such as FOXO1 and RUNX2. Promotes G2-M transition when in complex with a cyclin-B. Interacts with DLGAP5. Binds to the CDK inhibitors CDKN1A/p21 and CDKN1B/p27. Isoform 2 is unable to complex with cyclin-B1 and also fails to bind to CDKN1A/p21. Interacts with catalytically active CCNB1 and RALBP1 during mitosis to form an endocytotic complex during interphase. Associates with cyclins-A and B1 during S-phase in regenerating hepatocytes. Interacts with FANCC. Interacts with CEP63; this interaction recruits CDK1 to centrosomes. Interacts with CENPA. Interacts with NR1D1. Interacts with proteasome subunit PSMA8; to participate in meiosis progression during spermatogenesis. Phosphorylation at Thr-161 by CAK/CDK7 activates kinase activity. Phosphorylation at Thr-14 and Tyr-15 by PKMYT1 prevents nuclear translocation. Phosphorylation at Tyr-15 by WEE1 and WEE2 inhibits the protein kinase activity and acts as a negative regulator of entry into mitosis (G2 to M transition). Phosphorylation by PKMYT1 and WEE1 takes place during mitosis to keep CDK1-cyclin-B complexes inactive until the end of G2. By the end of G2, PKMYT1 and WEE1 are inactivated, but CDC25A and CDC25B are activated. Dephosphorylation by active CDC25A and CDC25B at Thr-14 and Tyr-15, leads to CDK1 activation at the G2-M transition. Phosphorylation at Tyr-15 by WEE2 during oogenesis is required to maintain meiotic arrest in oocytes during the germinal vesicle (GV) stage, a long period of quiescence at dictyate prophase I, leading to prevent meiotic reentry. Phosphorylation by WEE2 is also required for metaphase II exit during egg activation to ensure exit from meiosis in oocytes and promote pronuclear formation. Phosphorylated at Tyr-4 by PKR/EIF2AK2 upon genotoxic stress. This phosphorylation triggers CDK1 polyubiquitination and subsequent proteolysis, thus leading to G2 arrest. In response to UV irradiation, phosphorylation at Tyr-15 by PRKCD activates the G2/M DNA damage checkpoint. In terms of processing, polyubiquitinated upon genotoxic stress.

The protein localises to the nucleus. The protein resides in the cytoplasm. It is found in the mitochondrion. It localises to the cytoskeleton. Its subcellular location is the microtubule organizing center. The protein localises to the centrosome. The protein resides in the spindle. It carries out the reaction L-seryl-[protein] + ATP = O-phospho-L-seryl-[protein] + ADP + H(+). The enzyme catalyses L-threonyl-[protein] + ATP = O-phospho-L-threonyl-[protein] + ADP + H(+). The catalysed reaction is [DNA-directed RNA polymerase] + ATP = phospho-[DNA-directed RNA polymerase] + ADP + H(+). Phosphorylation at Thr-14 or Tyr-15 inactivates the enzyme, while phosphorylation at Thr-161 activates it. Activated through a multistep process; binding to cyclin-B is required for relocation of cyclin-kinase complexes to the nucleus, activated by CAK/CDK7-mediated phosphorylation on Thr-161, and CDC25-mediated dephosphorylation of inhibitory phosphorylation on Thr-14 and Tyr-15. Activity is restricted during S-phase in an ATR-dependent manner to prevent premature entry into G2. Repressed by the CDK inhibitors CDKN1A/p21 and CDKN1B/p27 during the G1 phase and by CDKN1A/p21 at the G1-S checkpoint upon DNA damage. Transient activation by rapid and transient dephosphorylation at Tyr-15 triggered by TGFB1. In terms of biological role, plays a key role in the control of the eukaryotic cell cycle by modulating the centrosome cycle as well as mitotic onset; promotes G2-M transition via association with multiple interphase cyclins. Phosphorylates PARVA/actopaxin, APC, AMPH, APC, BARD1, Bcl-xL/BCL2L1, BRCA2, CALD1, CASP8, CDC7, CDC20, CDC25A, CDC25C, CC2D1A, CENPA, CSNK2 proteins/CKII, FZR1/CDH1, CDK7, CEBPB, CHAMP1, DMD/dystrophin, EEF1 proteins/EF-1, EZH2, KIF11/EG5, EGFR, FANCG, FOS, GFAP, GOLGA2/GM130, GRASP1, UBE2A/hHR6A, HIST1H1 proteins/histone H1, HMGA1, HIVEP3/KRC, KAT5, LMNA, LMNB, LBR, MKI67, LATS1, MAP1B, MAP4, MARCKS, MCM2, MCM4, MKLP1, MLST8, MYB, NEFH, NFIC, NPC/nuclear pore complex, PITPNM1/NIR2, NPM1, NCL, NUCKS1, NPM1/numatrin, ORC1, PRKAR2A, EEF1E1/p18, EIF3F/p47, p53/TP53, NONO/p54NRB, PAPOLA, PLEC/plectin, RB1, TPPP, UL40/R2, RAB4A, RAP1GAP, RBBP8/CtIP, RCC1, RPS6KB1/S6K1, KHDRBS1/SAM68, ESPL1, SKI, BIRC5/survivin, STIP1, TEX14, beta-tubulins, MAPT/TAU, NEDD1, VIM/vimentin, TK1, FOXO1, RUNX1/AML1, SAMHD1, SIRT2, CGAS, ZAR1 and RUNX2. CDK1/CDC2-cyclin-B controls pronuclear union in interphase fertilized eggs. Essential for early stages of embryonic development. During G2 and early mitosis, CDC25A/B/C-mediated dephosphorylation activates CDK1/cyclin complexes which phosphorylate several substrates that trigger at least centrosome separation, Golgi dynamics, nuclear envelope breakdown and chromosome condensation. Once chromosomes are condensed and aligned at the metaphase plate, CDK1 activity is switched off by WEE1- and PKMYT1-mediated phosphorylation to allow sister chromatid separation, chromosome decondensation, reformation of the nuclear envelope and cytokinesis. Phosphorylates KRT5 during prometaphase and metaphase. Inactivated by PKR/EIF2AK2- and WEE1-mediated phosphorylation upon DNA damage to stop cell cycle and genome replication at the G2 checkpoint thus facilitating DNA repair. Reactivated after successful DNA repair through WIP1-dependent signaling leading to CDC25A/B/C-mediated dephosphorylation and restoring cell cycle progression. Catalyzes lamin (LMNA, LMNB1 and LMNB2) phosphorylation at the onset of mitosis, promoting nuclear envelope breakdown. In proliferating cells, CDK1-mediated FOXO1 phosphorylation at the G2-M phase represses FOXO1 interaction with 14-3-3 proteins and thereby promotes FOXO1 nuclear accumulation and transcription factor activity, leading to cell death of postmitotic neurons. The phosphorylation of beta-tubulins regulates microtubule dynamics during mitosis. NEDD1 phosphorylation promotes PLK1-mediated NEDD1 phosphorylation and subsequent targeting of the gamma-tubulin ring complex (gTuRC) to the centrosome, an important step for spindle formation. In addition, CC2D1A phosphorylation regulates CC2D1A spindle pole localization and association with SCC1/RAD21 and centriole cohesion during mitosis. The phosphorylation of Bcl-xL/BCL2L1 after prolongated G2 arrest upon DNA damage triggers apoptosis. In contrast, CASP8 phosphorylation during mitosis prevents its activation by proteolysis and subsequent apoptosis. This phosphorylation occurs in cancer cell lines, as well as in primary breast tissues and lymphocytes. EZH2 phosphorylation promotes H3K27me3 maintenance and epigenetic gene silencing. CALD1 phosphorylation promotes Schwann cell migration during peripheral nerve regeneration. CDK1-cyclin-B complex phosphorylates NCKAP5L and mediates its dissociation from centrosomes during mitosis. Regulates the amplitude of the cyclic expression of the core clock gene BMAL1 by phosphorylating its transcriptional repressor NR1D1, and this phosphorylation is necessary for SCF(FBXW7)-mediated ubiquitination and proteasomal degradation of NR1D1. Phosphorylates EML3 at 'Thr-881' which is essential for its interaction with HAUS augmin-like complex and TUBG1. Phosphorylates CGAS during mitosis, leading to its inhibition, thereby preventing CGAS activation by self DNA during mitosis. Phosphorylates SKA3 during mitosis which promotes SKA3 binding to the NDC80 complex and anchoring of the SKA complex to kinetochores, to enable stable attachment of mitotic spindle microtubules to kinetochores. The sequence is that of Cyclin-dependent kinase 1 (Cdk1) from Mus musculus (Mouse).